The following is a 940-amino-acid chain: Isoleucine--tRNA ligase (940 aa).

Residues 58–68 (PYANGSIHIGH) carry the 'HIGH' region motif. Glutamate 564 is an L-isoleucyl-5'-AMP binding site. A 'KMSKS' region motif is present at residues 605–609 (KMSKS). Lysine 608 contacts ATP. Residues cysteine 903, cysteine 906, cysteine 923, and cysteine 926 each coordinate Zn(2+).

This sequence belongs to the class-I aminoacyl-tRNA synthetase family. IleS type 1 subfamily. In terms of assembly, monomer. The cofactor is Zn(2+).

The protein localises to the cytoplasm. It catalyses the reaction tRNA(Ile) + L-isoleucine + ATP = L-isoleucyl-tRNA(Ile) + AMP + diphosphate. In terms of biological role, catalyzes the attachment of isoleucine to tRNA(Ile). As IleRS can inadvertently accommodate and process structurally similar amino acids such as valine, to avoid such errors it has two additional distinct tRNA(Ile)-dependent editing activities. One activity is designated as 'pretransfer' editing and involves the hydrolysis of activated Val-AMP. The other activity is designated 'posttransfer' editing and involves deacylation of mischarged Val-tRNA(Ile). This is Isoleucine--tRNA ligase from Shewanella putrefaciens (strain CN-32 / ATCC BAA-453).